Reading from the N-terminus, the 998-residue chain is Mediator of RNA polymerase II transcription subunit 14 (998 aa).

The protein belongs to the Mediator complex subunit 14 family. As to quaternary structure, component of the Mediator complex.

The protein resides in the nucleus. Functionally, component of the Mediator complex, a coactivator involved in the regulated transcription of nearly all RNA polymerase II-dependent genes. Mediator functions as a bridge to convey information from gene-specific regulatory proteins to the basal RNA polymerase II transcription machinery. Mediator is recruited to promoters by direct interactions with regulatory proteins and serves as a scaffold for the assembly of a functional preinitiation complex with RNA polymerase II and the general transcription factors. The polypeptide is Mediator of RNA polymerase II transcription subunit 14 (RGR1) (Kluyveromyces lactis (strain ATCC 8585 / CBS 2359 / DSM 70799 / NBRC 1267 / NRRL Y-1140 / WM37) (Yeast)).